The chain runs to 772 residues: Carnitine O-palmitoyltransferase 1, muscle isoform (772 aa).

Residues 1-47 (MAEAHQAVAFQFTVTPEGVDFRLSREALKHIYLSGINSWKKRLIRIK) are Cytoplasmic-facing. The helical transmembrane segment at 48–73 (NGILRGVYPGSPTSWLVVASATAGSS) threads the bilayer. Topologically, residues 74–102 (YYNVDISMGLVNHIQRCLPERYGPYWTPQ) are mitochondrial intermembrane. The helical transmembrane segment at 103–122 (TRALLSMAVVSTGVWMIGIF) threads the bilayer. Over 123 to 772 (FFRQTLKLLL…DLFQVPKTDS (650 aa)) the chain is Cytoplasmic. The active-site Proton acceptor is the H473. 555-567 (GKGLIKKCRTSPD) is a CoA binding site. Y589 and T602 together coordinate (R)-carnitine.

It belongs to the carnitine/choline acetyltransferase family.

The protein localises to the mitochondrion outer membrane. The enzyme catalyses (R)-carnitine + hexadecanoyl-CoA = O-hexadecanoyl-(R)-carnitine + CoA. The protein operates within lipid metabolism; fatty acid beta-oxidation. Functionally, catalyzes the transfer of the acyl group of long-chain fatty acid-CoA conjugates onto carnitine, an essential step for the mitochondrial uptake of long-chain fatty acids and their subsequent beta-oxidation in the mitochondrion. The chain is Carnitine O-palmitoyltransferase 1, muscle isoform (CPT1B) from Sus scrofa (Pig).